A 505-amino-acid polypeptide reads, in one-letter code: MASGRRAPRTGLLELRAGTGAGAGGERWQRVLVSLAEDALTVSPADGEPGPEPGAVREPEPAQINGAAEPGAAPPQLPEALLLQRRRVTVRKADAGGLGISIKGGRENKMPILISKIFKGLAADQTEALFVGDAILSVNGEDLSSATHDEAVQALKKTGKEVVLEVKYMKEVSPYFKNSAGGTSVGWDSPPASPLQRQPSSPGPQTRNLSEAKHVPLKMAYVSRRCTPSDPEHRYLEICSADGQDTIFLRAKDEASARSWAGAIQAQINALLPWVKDELQALLAASSPAGSQDIKQIGWLTEQLPSGGTAPTLALLTEKELLLYGGLPQTREALSRPARTAPLIATRLVHSGPSKGSVPYDAELSFALRTGTRHGVDTHLFSVESPQELAAWTRQLVDGCHRAAEGVQEVSTACTWNGRPCNLSVHIDKGFTLWAAEPGAARAVLLRQPFEKLQMSSDDGASLLFLDFGGAEGEIQLDLHSCPKTMVFIIHSFLSAKVTRLGLLA.

2 disordered regions span residues 1-24 (MASGRRAPRTGLLELRAGTGAGAG) and 40-75 (LTVSPADGEPGPEPGAVREPEPAQINGAAEPGAAPP). 2 consecutive PH domains span residues 6–269 (RAPR…AQIN) and 293–401 (DIKQ…DGCH). Low complexity predominate over residues 9–18 (RTGLLELRAG). Positions 87–170 (RVTVRKADAG…EVVLEVKYMK (84 aa)) constitute a PDZ domain. Phosphoserine occurs at positions 101, 184, 189, 193, and 200. The segment at 183–212 (TSVGWDSPPASPLQRQPSSPGPQTRNLSEA) is disordered. Polar residues predominate over residues 195–209 (LQRQPSSPGPQTRNL). An SU domain is found at 449 to 505 (PFEKLQMSSDDGASLLFLDFGGAEGEIQLDLHSCPKTMVFIIHSFLSAKVTRLGLLA). The interval 483-505 (PKTMVFIIHSFLSAKVTRLGLLA) is calmodulin-binding.

Belongs to the syntrophin family. Monomer and homodimer. Interacts with the dystrophin related protein DTNA; SGCG of the dystrophin glycoprotein complex; NOS1; GRB2; GA; TGFA; MAPK12 and the sodium channel proteins SCN4A and SCN5A. Interacts with the dystrophin protein DMD in a calmodulin dependent manner and with related protein UTRN; SGCA of the dystrophin glycoprotein complex; F-actin; calmodulin and with the other members of the syntrophin family SNTB1 and SNTB2. Interacts with MYOC; regulates muscle hypertrophy. Interacts with DTNB. In terms of processing, phosphorylated by CaM-kinase II. Phosphorylation may inhibit the interaction with DMD. Highly expressed in skeletal and cardiac muscle and is also detected in brain.

It localises to the cell membrane. Its subcellular location is the sarcolemma. It is found in the cell junction. The protein localises to the cytoplasm. The protein resides in the cytoskeleton. Adapter protein that binds to and probably organizes the subcellular localization of a variety of membrane proteins. May link various receptors to the actin cytoskeleton and the extracellular matrix via dystrophin glycoprotein complex. Plays an important role in synapse formation and in the organization of UTRN and acetylcholine receptors at the neuromuscular synapse. Binds to phosphatidylinositol 4,5-bisphosphate. The protein is Alpha-1-syntrophin (SNTA1) of Oryctolagus cuniculus (Rabbit).